Reading from the N-terminus, the 1309-residue chain is Phospholipase A I (1309 aa).

4 LRR repeats span residues 155–178 (LPLLEKLCLEHNKLSVLPPEIGKL), 180–201 (NLKILRVDNNMLISVPVELRQC), 203–223 (GLVELSLEHNKLVRPLLDFRA), and 224–248 (MAGLRILRLFGNPLEFLPEILPLHQ). 3 ARM repeats span residues 315-356 (DEGN…SLAR), 401-439 (SVSQKMLTKDMLKALKSLCAHKNPEVQRQALLAVGNLAF), and 440-481 (CLEN…ILGE). The PNPLA domain occupies 502 to 746 (LTMDGGGMKG…VANNPTIFAI (245 aa)). The GXGXXG signature appears at 506–511 (GGGMKG). Residues 538 to 542 (GTSTG) carry the GXSXG motif. The Nucleophile role is filled by Ser-540. Asp-733 acts as the Proton acceptor in catalysis. A DGA/G motif is present at residues 733-735 (DGA). The tract at residues 1183–1253 (VIGPSNEPQE…EDSDHEKTNR (71 aa)) is disordered. Over residues 1188-1208 (NEPQETPLITSQGSSEYNIGD) the composition is skewed to polar residues. Residues 1216 to 1235 (GEEEDEDEEVNEETEREEME) are compositionally biased toward acidic residues.

This sequence belongs to the patatin family.

The protein resides in the plastid. The protein localises to the chloroplast. In terms of biological role, possesses non-specific lipolytic acyl hydrolase (LAH) activity. Catalyzes the hydrolysis of the galactolipids monogalactosyldiacylglycerol (MGDG) and digalactosyldiacylglycerol (DGDG), and less efficiently the phoshpolipids phosphatidylcholine (PC), phosphatidylethanolamine (PE), phosphatidylglycerol (PG), phosphatidylserine (PS) and phosphatidylinositol (PI). Hydrolyzes phospholipids at both the sn-1 and sn-2 positions. Involved in basal jasmonic acid production and promotes resistance to the necrotrophic fungal pathogen Botrytis cinerea. In Arabidopsis thaliana (Mouse-ear cress), this protein is Phospholipase A I (PLA1).